Reading from the N-terminus, the 347-residue chain is Probable ribonucleotide transport ATP-binding protein mkl (347 aa).

Residues 16 to 252 (IEVKGLTKSF…DEPVVRQFLN (237 aa)) form the ABC transporter domain. 48–55 (GPSGTGKS) serves as a coordination point for ATP.

This sequence belongs to the ABC transporter superfamily.

Functionally, not known, could be involved in the transport of ribonucleotides. In Mycobacterium leprae (strain TN), this protein is Probable ribonucleotide transport ATP-binding protein mkl (mkl).